A 65-amino-acid chain; its full sequence is Large ribosomal subunit protein bL35 (65 aa).

Positions 1 to 10 are enriched in basic residues; sequence MPKMKSKSSA. Positions 1–21 are disordered; sequence MPKMKSKSSAKMRFSVRAGGT.

The protein belongs to the bacterial ribosomal protein bL35 family.

The protein is Large ribosomal subunit protein bL35 of Polynucleobacter necessarius subsp. necessarius (strain STIR1).